The primary structure comprises 385 residues: Phosphatidate cytidylyltransferase, mitochondrial (385 aa).

It belongs to the TAM41 family. Mg(2+) serves as cofactor. The cofactor is Co(2+). Cu(2+) is required as a cofactor.

The protein localises to the mitochondrion inner membrane. The catalysed reaction is a 1,2-diacyl-sn-glycero-3-phosphate + CTP + H(+) = a CDP-1,2-diacyl-sn-glycerol + diphosphate. It participates in phospholipid metabolism; CDP-diacylglycerol biosynthesis; CDP-diacylglycerol from sn-glycerol 3-phosphate: step 3/3. Its function is as follows. Catalyzes the formation of CDP-diacylglycerol (CDP-DAG) from phosphatidic acid (PA) in the mitochondrial inner membrane. Required for the biosynthesis of the dimeric phospholipid cardiolipin, which stabilizes supercomplexes of the mitochondrial respiratory chain in the mitochondrial inner membrane. This chain is Phosphatidate cytidylyltransferase, mitochondrial (TAM41), found in Saccharomyces cerevisiae (strain ATCC 204508 / S288c) (Baker's yeast).